The chain runs to 255 residues: Cyclic di-GMP phosphodiesterase PdeH (255 aa).

The region spanning 13–255 (EASIESLQER…ETLNTAVLAL (243 aa)) is the EAL domain.

It carries out the reaction 3',3'-c-di-GMP + H2O = 5'-phosphoguanylyl(3'-&gt;5')guanosine + H(+). In terms of biological role, involved in the control of the switch from cell motility to adhesion via regulation of cellular levels of cyclic-di-GMP (c-di-GMP). Part of a signaling cascade that regulates curli biosynthesis. The cascade is composed of two c-di-GMP control modules, in which c-di-GMP controlled by the DgcE/PdeH pair (module I) regulates the activity of the DgcM/PdeR pair (module II), which in turn regulates activity of the transcription factor MlrA and expression of the master biofilm regulator csgD. Effect on flagella is controlled via the c-di-GMP-binding flagellar brake protein YcgR. The polypeptide is Cyclic di-GMP phosphodiesterase PdeH (Escherichia coli (strain K12)).